The sequence spans 365 residues: Carbamoyl phosphate synthase small chain (365 aa).

CPSase stretches follow at residues 1–166 (MKRQ…PSPG) and 1–169 (MKRQ…GRGH). L-glutamine-binding residues include serine 45, glycine 218, and glycine 220. Positions 170–357 (RVVLVDFGMK…LTMIENFKKE (188 aa)) constitute a Glutamine amidotransferase type-1 domain. Cysteine 245 serves as the catalytic Nucleophile. L-glutamine contacts are provided by leucine 246, glutamine 249, asparagine 287, glycine 289, and tyrosine 290. Catalysis depends on residues histidine 330 and glutamate 332.

It belongs to the CarA family. Composed of two chains; the small (or glutamine) chain promotes the hydrolysis of glutamine to ammonia, which is used by the large (or ammonia) chain to synthesize carbamoyl phosphate. Tetramer of heterodimers (alpha,beta)4.

The enzyme catalyses hydrogencarbonate + L-glutamine + 2 ATP + H2O = carbamoyl phosphate + L-glutamate + 2 ADP + phosphate + 2 H(+). The catalysed reaction is L-glutamine + H2O = L-glutamate + NH4(+). It participates in amino-acid biosynthesis; L-arginine biosynthesis; carbamoyl phosphate from bicarbonate: step 1/1. Its pathway is pyrimidine metabolism; UMP biosynthesis via de novo pathway; (S)-dihydroorotate from bicarbonate: step 1/3. In terms of biological role, small subunit of the glutamine-dependent carbamoyl phosphate synthetase (CPSase). CPSase catalyzes the formation of carbamoyl phosphate from the ammonia moiety of glutamine, carbonate, and phosphate donated by ATP, constituting the first step of 2 biosynthetic pathways, one leading to arginine and/or urea and the other to pyrimidine nucleotides. The small subunit (glutamine amidotransferase) binds and cleaves glutamine to supply the large subunit with the substrate ammonia. This chain is Carbamoyl phosphate synthase small chain, found in Bacillus anthracis.